We begin with the raw amino-acid sequence, 94 residues long: Small ribosomal subunit protein bS6 (94 aa).

The protein belongs to the bacterial ribosomal protein bS6 family.

Functionally, binds together with bS18 to 16S ribosomal RNA. The protein is Small ribosomal subunit protein bS6 of Clostridium botulinum (strain Kyoto / Type A2).